The sequence spans 323 residues: Cytoskeleton protein RodZ (323 aa).

At 1 to 111 (MNTEASQDKT…LGKRRKKRDG (111 aa)) the chain is on the cytoplasmic side. Residues 19 to 71 (LRQAREQLGLSQQAVAERLCLKMSTVRDIEEDNLSADLASTFVRGYIRSYAKL) form the HTH cro/C1-type domain. Residues 30-49 (QQAVAERLCLKMSTVRDIEE) constitute a DNA-binding region (H-T-H motif). The chain crosses the membrane as a helical; Signal-anchor for type II membrane protein span at residues 112-132 (WLMSFTWLIVFVVVGLTGAWW). Residues 133–323 (WQNHKAQQEE…RVARLTVAAQ (191 aa)) are Periplasmic-facing. 2 stretches are compositionally biased toward polar residues: residues 149 to 172 (QSSA…NADN) and 179 to 214 (NGST…SPSQ). Positions 149–236 (QSSAQLSQNN…APLPTADAGV (88 aa)) are disordered. A compositionally biased stretch (low complexity) spans 215 to 234 (TTLPETTPAAPTAPLPTADA).

This sequence belongs to the RodZ family.

It localises to the cell inner membrane. In terms of biological role, cytoskeletal protein that is involved in cell-shape control through regulation of the length of the long axis. The sequence is that of Cytoskeleton protein RodZ from Serratia proteamaculans (strain 568).